A 403-amino-acid chain; its full sequence is Cytoplasmic tRNA 2-thiolation protein 2 (403 aa).

It belongs to the CTU2/NCS2 family.

The protein localises to the cytoplasm. It participates in tRNA modification; 5-methoxycarbonylmethyl-2-thiouridine-tRNA biosynthesis. Functionally, plays a central role in 2-thiolation of mcm(5)S(2)U at tRNA wobble positions of tRNA(Lys), tRNA(Glu) and tRNA(Gln). May act by forming a heterodimer with NCS6/CTU1 that ligates sulfur from thiocarboxylated URM1 onto the uridine of tRNAs at wobble position. In Drosophila ananassae (Fruit fly), this protein is Cytoplasmic tRNA 2-thiolation protein 2.